We begin with the raw amino-acid sequence, 527 residues long: Bifunctional dihydrofolate reductase-thymidylate synthase (527 aa).

A DHFR domain is found at 28–238; sequence PFSVVVASDE…KKYQFEKLVP (211 aa). Val32 contributes to the substrate binding site. Residues Ala34 and 40–46 each bind NADP(+); that span reads GIGDGGT. Asp54 contacts substrate. NADP(+) is bound by residues 84–86 and 105–108; these read RKT and LSRS. 3 residues coordinate substrate: Ile160, Tyr166, and Thr184. 161–168 contributes to the NADP(+) binding site; that stretch reads GGGTIYKQ. Positions 243 to 527 are thymidylate synthase; that stretch reads EEQYLNLVGR…YPVISMEMAV (285 aa). Position 263 (Arg263) interacts with dUMP. The active site involves Cys409. DUMP contacts are provided by residues His410, 428 to 432, Asn440, and 470 to 472; these read QRSCD and HVY.

It in the N-terminal section; belongs to the dihydrofolate reductase family. In the C-terminal section; belongs to the thymidylate synthase family. As to quaternary structure, homodimer.

It catalyses the reaction dUMP + (6R)-5,10-methylene-5,6,7,8-tetrahydrofolate = 7,8-dihydrofolate + dTMP. The catalysed reaction is (6S)-5,6,7,8-tetrahydrofolate + NADP(+) = 7,8-dihydrofolate + NADPH + H(+). Its pathway is pyrimidine metabolism; dTTP biosynthesis. It participates in cofactor biosynthesis; tetrahydrofolate biosynthesis; 5,6,7,8-tetrahydrofolate from 7,8-dihydrofolate: step 1/1. Bifunctional enzyme. Involved in de novo dTMP biosynthesis. Key enzyme in folate metabolism. Catalyzes an essential reaction for de novo glycine and purine synthesis, DNA precursor synthesis, and for the conversion of dUMP to dTMP. The polypeptide is Bifunctional dihydrofolate reductase-thymidylate synthase (Trypanosoma brucei brucei).